The chain runs to 146 residues: 3-hydroxyacyl-[acyl-carrier-protein] dehydratase FabZ (146 aa).

Residue His-49 is part of the active site.

It belongs to the thioester dehydratase family. FabZ subfamily.

It is found in the cytoplasm. It carries out the reaction a (3R)-hydroxyacyl-[ACP] = a (2E)-enoyl-[ACP] + H2O. Functionally, involved in unsaturated fatty acids biosynthesis. Catalyzes the dehydration of short chain beta-hydroxyacyl-ACPs and long chain saturated and unsaturated beta-hydroxyacyl-ACPs. This chain is 3-hydroxyacyl-[acyl-carrier-protein] dehydratase FabZ, found in Pseudomonas entomophila (strain L48).